The primary structure comprises 387 residues: Alanine racemase (387 aa).

Lysine 38 serves as the catalytic Proton acceptor; specific for D-alanine. Residue lysine 38 is modified to N6-(pyridoxal phosphate)lysine. Residue arginine 136 coordinates substrate. The active-site Proton acceptor; specific for L-alanine is tyrosine 267. Methionine 316 contacts substrate.

Belongs to the alanine racemase family. It depends on pyridoxal 5'-phosphate as a cofactor.

It catalyses the reaction L-alanine = D-alanine. It functions in the pathway amino-acid biosynthesis; D-alanine biosynthesis; D-alanine from L-alanine: step 1/1. Its function is as follows. Catalyzes the interconversion of L-alanine and D-alanine. May also act on other amino acids. This Clostridium tetani (strain Massachusetts / E88) protein is Alanine racemase (alr).